The following is a 219-amino-acid chain: UPF0619 GPI-anchored membrane protein AFUA_3G00880 (219 aa).

Residues 1-16 (MRFALTLTAFVGSVAA) form the signal peptide. N85 carries N-linked (GlcNAc...) asparagine glycosylation. 2 disordered regions span residues 107–144 (SQQF…GTVS) and 160–205 (SSTL…SLTV). The segment covering 114–144 (SSGSSTTSDSTSSASATGSASTSSSSTGTVS) has biased composition (low complexity). A lipid anchor (GPI-like-anchor amidated asparagine) is attached at N198. Residues 199–219 (GAGSLTVPAGSLLLGLVALAL) constitute a propeptide, removed in mature form.

It belongs to the UPF0619 family. Post-translationally, the GPI-like anchor contains a phosphoceramide lipid group. The anchor position has not been determined.

It localises to the cell membrane. The polypeptide is UPF0619 GPI-anchored membrane protein AFUA_3G00880 (Aspergillus fumigatus (strain ATCC MYA-4609 / CBS 101355 / FGSC A1100 / Af293) (Neosartorya fumigata)).